An 874-amino-acid polypeptide reads, in one-letter code: Protein translocase subunit SecA (874 aa).

ATP is bound by residues Gln87, 105–109 (GEGKT), and Asp512. The Zn(2+) site is built by Cys859, Cys861, Cys870, and His871.

It belongs to the SecA family. In terms of assembly, monomer and homodimer. Part of the essential Sec protein translocation apparatus which comprises SecA, SecYEG and auxiliary proteins SecDF-YajC and YidC. Zn(2+) is required as a cofactor.

It is found in the cell inner membrane. The protein localises to the cytoplasm. It carries out the reaction ATP + H2O + cellular proteinSide 1 = ADP + phosphate + cellular proteinSide 2.. In terms of biological role, part of the Sec protein translocase complex. Interacts with the SecYEG preprotein conducting channel. Has a central role in coupling the hydrolysis of ATP to the transfer of proteins into and across the cell membrane, serving both as a receptor for the preprotein-SecB complex and as an ATP-driven molecular motor driving the stepwise translocation of polypeptide chains across the membrane. The sequence is that of Protein translocase subunit SecA from Buchnera aphidicola subsp. Schizaphis graminum (strain Sg).